The chain runs to 278 residues: Thiazole synthase (278 aa).

K107 serves as the catalytic Schiff-base intermediate with DXP. Residues G168, 194-195 (AG), and 216-217 (AS) each bind 1-deoxy-D-xylulose 5-phosphate.

It belongs to the ThiG family. In terms of assembly, homotetramer. Forms heterodimers with either ThiH or ThiS.

Its subcellular location is the cytoplasm. The catalysed reaction is [ThiS sulfur-carrier protein]-C-terminal-Gly-aminoethanethioate + 2-iminoacetate + 1-deoxy-D-xylulose 5-phosphate = [ThiS sulfur-carrier protein]-C-terminal Gly-Gly + 2-[(2R,5Z)-2-carboxy-4-methylthiazol-5(2H)-ylidene]ethyl phosphate + 2 H2O + H(+). The protein operates within cofactor biosynthesis; thiamine diphosphate biosynthesis. In terms of biological role, catalyzes the rearrangement of 1-deoxy-D-xylulose 5-phosphate (DXP) to produce the thiazole phosphate moiety of thiamine. Sulfur is provided by the thiocarboxylate moiety of the carrier protein ThiS. In vitro, sulfur can be provided by H(2)S. This is Thiazole synthase from Corynebacterium urealyticum (strain ATCC 43042 / DSM 7109).